The following is a 131-amino-acid chain: MKGVHDMAKILQTNIFNLKFTSNKSNLKNVQRIILHTSKRRIKSKCADNTIYSKINANFTYDCFHFKSFFPIMPNFCPILTLSPTLTSNLNSVGASKQSTTVLPNSKPPISSPLTKGIPPNILLAFSYTAW.

This is an uncharacterized protein from Saccharomyces cerevisiae (strain ATCC 204508 / S288c) (Baker's yeast).